A 553-amino-acid polypeptide reads, in one-letter code: Membrane protein insertase YidC (553 aa).

5 consecutive transmembrane segments (helical) span residues 7-24 (VLWV…DNWQ), 365-385 (WGWA…PLSA), 435-455 (LPVV…LASV), 474-494 (PFFI…SLNP), and 509-529 (PIAF…YYVV).

It belongs to the OXA1/ALB3/YidC family. Type 1 subfamily. Interacts with the Sec translocase complex via SecD. Specifically interacts with transmembrane segments of nascent integral membrane proteins during membrane integration.

It localises to the cell inner membrane. Its function is as follows. Required for the insertion and/or proper folding and/or complex formation of integral membrane proteins into the membrane. Involved in integration of membrane proteins that insert both dependently and independently of the Sec translocase complex, as well as at least some lipoproteins. Aids folding of multispanning membrane proteins. This is Membrane protein insertase YidC from Burkholderia orbicola (strain MC0-3).